A 322-amino-acid chain; its full sequence is Phospho-N-acetylmuramoyl-pentapeptide-transferase (322 aa).

A run of 10 helical transmembrane segments spans residues 10–30 (YTAL…IPML), 51–71 (NGTP…TGLT), 79–99 (MAVG…DDFI), 107–127 (LGLK…YVAF), 146–166 (FVIN…VAIV), 178–198 (LASG…SSIA), 203–223 (VAVL…FNSY), 227–247 (VFMG…FSVL), 250–270 (SVLI…SVLI), and 302–322 (VVFI…IAVF).

This sequence belongs to the glycosyltransferase 4 family. MraY subfamily. Requires Mg(2+) as cofactor.

It localises to the cell membrane. The enzyme catalyses UDP-N-acetyl-alpha-D-muramoyl-L-alanyl-gamma-D-glutamyl-meso-2,6-diaminopimeloyl-D-alanyl-D-alanine + di-trans,octa-cis-undecaprenyl phosphate = di-trans,octa-cis-undecaprenyl diphospho-N-acetyl-alpha-D-muramoyl-L-alanyl-D-glutamyl-meso-2,6-diaminopimeloyl-D-alanyl-D-alanine + UMP. It participates in cell wall biogenesis; peptidoglycan biosynthesis. Functionally, catalyzes the initial step of the lipid cycle reactions in the biosynthesis of the cell wall peptidoglycan: transfers peptidoglycan precursor phospho-MurNAc-pentapeptide from UDP-MurNAc-pentapeptide onto the lipid carrier undecaprenyl phosphate, yielding undecaprenyl-pyrophosphoryl-MurNAc-pentapeptide, known as lipid I. The chain is Phospho-N-acetylmuramoyl-pentapeptide-transferase from Clostridioides difficile (strain 630) (Peptoclostridium difficile).